Reading from the N-terminus, the 82-residue chain is Small ribosomal subunit protein bS16 (82 aa).

Belongs to the bacterial ribosomal protein bS16 family.

In Synechococcus elongatus (strain ATCC 33912 / PCC 7942 / FACHB-805) (Anacystis nidulans R2), this protein is Small ribosomal subunit protein bS16.